A 288-amino-acid chain; its full sequence is 4-diphosphocytidyl-2-C-methyl-D-erythritol kinase (288 aa).

The active site involves lysine 13. Residue 96–106 participates in ATP binding; that stretch reads PMGGGIGGGSS. The active site involves aspartate 138.

The protein belongs to the GHMP kinase family. IspE subfamily.

The enzyme catalyses 4-CDP-2-C-methyl-D-erythritol + ATP = 4-CDP-2-C-methyl-D-erythritol 2-phosphate + ADP + H(+). The protein operates within isoprenoid biosynthesis; isopentenyl diphosphate biosynthesis via DXP pathway; isopentenyl diphosphate from 1-deoxy-D-xylulose 5-phosphate: step 3/6. In terms of biological role, catalyzes the phosphorylation of the position 2 hydroxy group of 4-diphosphocytidyl-2C-methyl-D-erythritol. This chain is 4-diphosphocytidyl-2-C-methyl-D-erythritol kinase, found in Aliivibrio fischeri (strain MJ11) (Vibrio fischeri).